The primary structure comprises 437 residues: Enolase-related protein 1 (437 aa).

His-160 and Glu-169 together coordinate substrate. Catalysis depends on Glu-212, which acts as the Proton donor. Mg(2+) is bound by residues Asp-247, Glu-296, and Asp-321. The substrate site is built by Glu-296 and Asp-321. Residue Lys-346 is the Proton acceptor of the active site. Residues 373-376 (SHRS) and Lys-397 each bind substrate.

It belongs to the enolase family. Mg(2+) serves as cofactor.

It catalyses the reaction (2R)-2-phosphoglycerate = phosphoenolpyruvate + H2O. It functions in the pathway carbohydrate degradation; glycolysis; pyruvate from D-glyceraldehyde 3-phosphate: step 4/5. The polypeptide is Enolase-related protein 1 (ERR1) (Saccharomyces cerevisiae (strain ATCC 204508 / S288c) (Baker's yeast)).